Reading from the N-terminus, the 260-residue chain is Small ribosomal subunit protein eS1 (260 aa).

Alanine 2 bears the N-acetylalanine; partial mark.

It belongs to the eukaryotic ribosomal protein eS1 family. In terms of assembly, component of the small ribosomal subunit. Mature ribosomes consist of a small (40S) and a large (60S) subunit. The 40S subunit contains about 33 different proteins and 1 molecule of RNA (18S). The 60S subunit contains about 49 different proteins and 3 molecules of RNA (25S, 5.8S and 5S).

It is found in the cytoplasm. This chain is Small ribosomal subunit protein eS1, found in Mycosarcoma maydis (Corn smut fungus).